The following is a 611-amino-acid chain: Histone acetyltransferase KAT7 (611 aa).

The disordered stretch occupies residues 1–173 (MPRRKRNAGS…SDLSHRPKRR (173 aa)). Position 10 is a phosphoserine (serine 10). Positions 42–57 (VTRSSARLSQSSQDSS) are enriched in low complexity. Phosphoserine; by ATR occurs at positions 50 and 53. The residue at position 57 (serine 57) is a Phosphoserine; by PLK1. Serine 64 is modified (phosphoserine). Threonine 85 and threonine 88 each carry phosphothreonine; by CDK1. Polar residues predominate over residues 96-105 (QTRSSGSETE). A Phosphoserine modification is found at serine 102. Threonine 104 carries the phosphothreonine modification. Residues 110 to 125 (FSDRETKNTADHDESP) are compositionally biased toward basic and acidic residues. Phosphoserine occurs at positions 111 and 124. Position 128 is a phosphothreonine (threonine 128). The span at 134 to 145 (PSSESDIDISSP) shows a compositional bias: low complexity. The span at 148 to 168 (SHDESIAKDMSLKDSGSDLSH) shows a compositional bias: basic and acidic residues. Residues serine 158, serine 162, serine 164, and serine 178 each carry the phosphoserine modification. The CCHHC-type zinc-finger motif lies at 176–219 (HESYNFNMKCPTPGCNSLGHLTGKHERHFSISGCPLYHNLSADE). N6-acetyllysine occurs at positions 199 and 277. A Glycyl lysine isopeptide (Lys-Gly) (interchain with G-Cter in SUMO2) cross-link involves residue lysine 323. An MYST-type HAT domain is found at 332 to 607 (EGSNMIKTIA…MDPSCLKWTP (276 aa)). Lysine 338 is covalently cross-linked (Glycyl lysine isopeptide (Lys-Gly) (interchain with G-Cter in ubiquitin)). A C2HC MYST-type zinc finger spans residues 365-390 (LYMCEFCLKYMKSQTILRRHMAKCVW). Zn(2+) is bound by residues cysteine 368, cysteine 371, histidine 384, and cysteine 388. N6-acetyllysine; by autocatalysis is present on lysine 432. Acetyl-CoA is bound by residues 475–477 (ILT) and 483–488 (RQGYGK). A Phosphoserine modification is found at serine 506. Catalysis depends on glutamate 508, which acts as the Proton donor/acceptor. Positions 512 and 521 each coordinate acetyl-CoA.

It belongs to the MYST (SAS/MOZ) family. Component of the HBO1 complex composed of KAT7/HBO1, MEAF6, ING4 or ING5, and one scaffold subunit: complexes containing BRPF scaffold (BRPF1, BRD1/BRPF2 or BRPF3) direct KAT7/HBO1 specificity towards H3K14ac, while complexes containing JADE scaffold (JADE1, JADE2 and JADE3) mediate acetylation of histone H4. Interacts with MCM2 and ORC1. Interacts with the androgen receptor (AR); in the presence of dihydrotestosterone. Interacts with CDT1. Interacts with MAP2K1 and CUL1. Interacts with p53/TP53; leading to inhibit histone acetyltransferase activity. Interacts with MIS18BP1. Post-translationally, phosphorylated at Ser-50 and Ser-53 by ATR in response to DNA damage, promoting its ubiquitination by the CRL4(DDB2) complex and subsequent degradation. Phosphorylation at Ser-50 and Ser-53 by ATR in response to ultraviolet-induced DNA, promotes localization to DNA damage sites. Phosphorylation at Ser-57 by PLK1 during mitosis seems important for prereplicative complex formation and DNA replication licensing, and requires prior phosphorylation at Thr-85 and Thr-88 by CDK1. Phosphorylated by MAP2K1, which accelerates its degradation. Ubiquitinated at Lys-338, leading to proteasomal degradation. Ubiquitinated by the CRL4(DDB2) complex following phosphorylation by ATR, leading to its subsequent degradation. In terms of processing, autoacetylation at Lys-432 is required for proper function. In terms of tissue distribution, ubiquitously expressed, with highest levels in testis.

Its subcellular location is the nucleus. The protein resides in the chromosome. It is found in the centromere. The protein localises to the cytoplasm. It localises to the cytosol. The enzyme catalyses L-lysyl-[histone] + acetyl-CoA = N(6)-acetyl-L-lysyl-[histone] + CoA + H(+). With respect to regulation, histone acetyltransferase activity is inhibited by GMNN in the context of a complex with CDT1, inhibiting histone H4 acetylation and DNA replication licensing. Selectively inhibited by WM-3835 (N'-(4-fluoro-5-methyl-[1,1'-biphenyl]-3-carbonyl)-3- hydroxybenzenesulfonohydrazide) inhibitor. Its function is as follows. Catalytic subunit of histone acetyltransferase HBO1 complexes, which specifically mediate acetylation of histone H3 at 'Lys-14' (H3K14ac), thereby regulating various processes, such as gene transcription, protein ubiquitination, immune regulation, stem cell pluripotent and self-renewal maintenance and embryonic development. Some complexes also catalyze acetylation of histone H4 at 'Lys-5', 'Lys-8' and 'Lys-12' (H4K5ac, H4K8ac and H4K12ac, respectively), regulating DNA replication initiation, regulating DNA replication initiation. Specificity of the HBO1 complexes is determined by the scaffold subunit: complexes containing BRPF scaffold (BRPF1, BRD1/BRPF2 or BRPF3) direct KAT7/HBO1 specificity towards H3K14ac, while complexes containing JADE (JADE1, JADE2 and JADE3) scaffold direct KAT7/HBO1 specificity towards histone H4. H3K14ac promotes transcriptional elongation by facilitating the processivity of RNA polymerase II. Acts as a key regulator of hematopoiesis by forming a complex with BRD1/BRPF2, directing KAT7/HBO1 specificity towards H3K14ac and promoting erythroid differentiation. H3K14ac is also required for T-cell development. KAT7/HBO1-mediated acetylation facilitates two consecutive steps, licensing and activation, in DNA replication initiation: H3K14ac facilitates the activation of replication origins, and histone H4 acetylation (H4K5ac, H4K8ac and H4K12ac) facilitates chromatin loading of MCM complexes, promoting DNA replication licensing. Acts as a positive regulator of centromeric CENPA assembly: recruited to centromeres and mediates histone acetylation, thereby preventing centromere inactivation mediated by SUV39H1, possibly by increasing histone turnover/exchange. Involved in nucleotide excision repair: phosphorylation by ATR in response to ultraviolet irradiation promotes its localization to DNA damage sites, where it mediates histone acetylation to facilitate recruitment of XPC at the damaged DNA sites. Acts as an inhibitor of NF-kappa-B independently of its histone acetyltransferase activity. In terms of biological role, plays a central role in the maintenance of leukemia stem cells in acute myeloid leukemia (AML). Acts by mediating acetylation of histone H3 at 'Lys-14' (H3K14ac), thereby facilitating the processivity of RNA polymerase II to maintain the high expression of key genes, such as HOXA9 and HOXA10 that help to sustain the functional properties of leukemia stem cells. The sequence is that of Histone acetyltransferase KAT7 from Homo sapiens (Human).